A 278-amino-acid polypeptide reads, in one-letter code: Orotidine 5'-phosphate decarboxylase (278 aa).

Catalysis depends on Lys96, which acts as the Proton donor.

The protein belongs to the OMP decarboxylase family. Type 2 subfamily.

It catalyses the reaction orotidine 5'-phosphate + H(+) = UMP + CO2. The protein operates within pyrimidine metabolism; UMP biosynthesis via de novo pathway; UMP from orotate: step 2/2. The sequence is that of Orotidine 5'-phosphate decarboxylase (pyrF) from Streptomyces coelicolor (strain ATCC BAA-471 / A3(2) / M145).